The primary structure comprises 82 residues: Cyclin-dependent protein kinase inhibitor SMR5 (82 aa).

The interval 1 to 26 is disordered; that stretch reads MEEKNYDDGDTVTVDDDYQMGCTTPT. A compositionally biased stretch (acidic residues) spans 8–18; it reads DGDTVTVDDDY.

In terms of assembly, interacts with CDKA-1 and D-type cyclins. As to expression, expressed in columella cells in the roots and in root meristems after induction.

Probable cyclin-dependent protein kinase (CDK) inhibitor that functions as a repressor of mitosis in the endoreduplication cell cycle. Acts as a potent cell cycle inhibitor, regulating a hydroxyurea-dependent checkpoint in leaves. Essential to activate a high-light-dependent cell cycle checkpoint. This is Cyclin-dependent protein kinase inhibitor SMR5 from Arabidopsis thaliana (Mouse-ear cress).